The sequence spans 157 residues: Protein Smg homolog (157 aa).

Belongs to the Smg family.

The sequence is that of Protein Smg homolog from Alkalilimnicola ehrlichii (strain ATCC BAA-1101 / DSM 17681 / MLHE-1).